A 210-amino-acid chain; its full sequence is UPF0502 protein Sama_1967 (210 aa).

It belongs to the UPF0502 family.

In Shewanella amazonensis (strain ATCC BAA-1098 / SB2B), this protein is UPF0502 protein Sama_1967.